Reading from the N-terminus, the 3912-residue chain is Ubiquitin carboxyl-terminal hydrolase puf (3912 aa).

5 disordered regions span residues Ala-101–His-172, Asn-518–Glu-590, Asp-660–Asp-688, Val-851–Ser-878, and Ser-1491–Ser-1611. The segment covering Glu-106–Pro-133 has biased composition (basic and acidic residues). The segment covering Ser-134 to Gly-143 has biased composition (low complexity). The span at Lys-150–Thr-164 shows a compositional bias: pro residues. The segment covering Ser-522–Ser-532 has biased composition (low complexity). Residues Ile-576–Lys-585 show a composition bias toward basic and acidic residues. The span at Asp-660–Ser-687 shows a compositional bias: acidic residues. Residues Lys-862 to Gln-876 are compositionally biased toward polar residues. Residues Val-1511–Arg-1520 show a composition bias toward basic residues. Over residues Thr-1550–Gly-1567 the composition is skewed to polar residues. Over residues Lys-1583 to Pro-1594 the composition is skewed to basic and acidic residues. The segment covering Pro-1600–Ala-1609 has biased composition (pro residues). The USP domain occupies Val-2015–Arg-2380. Catalysis depends on Cys-2024, which acts as the Nucleophile. Residues Tyr-2249–Ala-2263 show a composition bias toward basic and acidic residues. Residues Tyr-2249–Lys-2274 are disordered. His-2305 acts as the Proton acceptor in catalysis. Disordered stretches follow at residues Glu-2391–Ala-2529, Gln-3322–Gln-3344, Ser-3657–Glu-3776, and Ala-3800–Ile-3912. Composition is skewed to basic and acidic residues over residues Val-2402–Lys-2413 and Glu-2433–Thr-2488. Residues Asn-2504–Gln-2523 show a composition bias toward low complexity. Over residues Ser-3657 to Ser-3703 the composition is skewed to basic and acidic residues. The segment covering Ser-3706 to Lys-3721 has biased composition (polar residues). Residues Ser-3741–Leu-3751 show a composition bias toward acidic residues. Residues Thr-3766 to Glu-3776 are compositionally biased toward basic and acidic residues. Polar residues predominate over residues Pro-3865–Glu-3877. Residues Ser-3878–Ile-3912 show a composition bias toward low complexity.

Belongs to the peptidase C19 family. Interacts with Myc and ago.

It is found in the nucleus. It carries out the reaction Thiol-dependent hydrolysis of ester, thioester, amide, peptide and isopeptide bonds formed by the C-terminal Gly of ubiquitin (a 76-residue protein attached to proteins as an intracellular targeting signal).. Its function is as follows. Ubiquitin hydrolase that can remove conjugated ubiquitin from target proteins and polyubiquitin chains. Essential for Myc-mediated cell growth and proliferation in developing eyes and wings. In the wing and eye, the deubiquitinating activity acts as an antagonist to the SCF E3 ubiquitin-protein ligase member archipelago (ago) to regulate Myc and CycE stability and thus control cell growth and proliferation. Also appears to regulate ago by modulating its induction by Myc. May also promote cell apoptosis in the wing imaginal disk, acting in an apoptotic pathway that appears to be largely independent of Myc. Required for preventing the activation of the immune deficiency (Imd) and Toll signaling cascades under unchallenged conditions. Also appears to be involved in modulating the differential expression of certain antimicrobial peptides (AMP) in response to infection by either Gram-positive or Gram-negative bacteria. Involved in the regulation of DNA damage repair pathways, including euchromatic site-specific double strand break (DSB) repair. The chain is Ubiquitin carboxyl-terminal hydrolase puf from Drosophila melanogaster (Fruit fly).